Consider the following 261-residue polypeptide: tRNA U34 carboxymethyltransferase (261 aa).

Residues lysine 25, tryptophan 39, lysine 44, glycine 63, 114–115 (VE), tyrosine 135, and arginine 250 each bind carboxy-S-adenosyl-L-methionine.

Belongs to the class I-like SAM-binding methyltransferase superfamily. CmoB family. In terms of assembly, homotetramer.

The catalysed reaction is carboxy-S-adenosyl-L-methionine + 5-hydroxyuridine(34) in tRNA = 5-carboxymethoxyuridine(34) in tRNA + S-adenosyl-L-homocysteine + H(+). In terms of biological role, catalyzes carboxymethyl transfer from carboxy-S-adenosyl-L-methionine (Cx-SAM) to 5-hydroxyuridine (ho5U) to form 5-carboxymethoxyuridine (cmo5U) at position 34 in tRNAs. The sequence is that of tRNA U34 carboxymethyltransferase from Helicobacter pylori (strain HPAG1).